The following is a 292-amino-acid chain: Acetylglutamate kinase (292 aa).

Residues 64 to 65, Arg86, and Asn190 each bind substrate; that span reads GG.

It belongs to the acetylglutamate kinase family. ArgB subfamily.

Its subcellular location is the cytoplasm. It catalyses the reaction N-acetyl-L-glutamate + ATP = N-acetyl-L-glutamyl 5-phosphate + ADP. It functions in the pathway amino-acid biosynthesis; L-arginine biosynthesis; N(2)-acetyl-L-ornithine from L-glutamate: step 2/4. Catalyzes the ATP-dependent phosphorylation of N-acetyl-L-glutamate. The sequence is that of Acetylglutamate kinase from Leptospira biflexa serovar Patoc (strain Patoc 1 / Ames).